The sequence spans 138 residues: UPF0201 protein PYRAB09730 (138 aa).

The protein belongs to the UPF0201 family.

The sequence is that of UPF0201 protein PYRAB09730 from Pyrococcus abyssi (strain GE5 / Orsay).